The primary structure comprises 210 residues: MTGLFITLEGPEGAGKSTNRDYLAAQLRAQGVQVLLTREPGGTPLAERIRELLLAPSDEGMSADTELLLVFAARAQHLAEVIRPALARGEVVLCDRFTDATYAYQGGGRGLSHERIAALEQFVQGDLRPDLTLVFDLPVEIGLSRAAARGRLDRFEQEGRAFFDAVRSTYLNRAKAEPARYRLVDAAQSLADVQASLDKLLPELLELQRG.

Position 10–17 (10–17 (GPEGAGKS)) interacts with ATP.

It belongs to the thymidylate kinase family.

The catalysed reaction is dTMP + ATP = dTDP + ADP. Its function is as follows. Phosphorylation of dTMP to form dTDP in both de novo and salvage pathways of dTTP synthesis. This chain is Thymidylate kinase, found in Pseudomonas syringae pv. tomato (strain ATCC BAA-871 / DC3000).